The following is an 83-amino-acid chain: Small ribosomal subunit protein bS20 (83 aa).

Over residues 1–11 (MANHKSAAKRA) the composition is skewed to basic residues. A disordered region spans residues 1 to 44 (MANHKSAAKRAKQSEARRLRNKSTRSSMNTAVKKVRTAKEAGTD).

This sequence belongs to the bacterial ribosomal protein bS20 family.

Binds directly to 16S ribosomal RNA. The chain is Small ribosomal subunit protein bS20 from Desulforapulum autotrophicum (strain ATCC 43914 / DSM 3382 / VKM B-1955 / HRM2) (Desulfobacterium autotrophicum).